The following is a 587-amino-acid chain: 2-succinyl-5-enolpyruvyl-6-hydroxy-3-cyclohexene-1-carboxylate synthase (587 aa).

The protein belongs to the TPP enzyme family. MenD subfamily. As to quaternary structure, homodimer. The cofactor is Mg(2+). Mn(2+) serves as cofactor. Thiamine diphosphate is required as a cofactor.

The catalysed reaction is isochorismate + 2-oxoglutarate + H(+) = 5-enolpyruvoyl-6-hydroxy-2-succinyl-cyclohex-3-ene-1-carboxylate + CO2. The protein operates within quinol/quinone metabolism; 1,4-dihydroxy-2-naphthoate biosynthesis; 1,4-dihydroxy-2-naphthoate from chorismate: step 2/7. It functions in the pathway cofactor biosynthesis; phylloquinone biosynthesis. Catalyzes the thiamine diphosphate-dependent decarboxylation of 2-oxoglutarate and the subsequent addition of the resulting succinic semialdehyde-thiamine pyrophosphate anion to isochorismate to yield 2-succinyl-5-enolpyruvyl-6-hydroxy-3-cyclohexene-1-carboxylate (SEPHCHC). The polypeptide is 2-succinyl-5-enolpyruvyl-6-hydroxy-3-cyclohexene-1-carboxylate synthase (Prochlorococcus marinus (strain MIT 9215)).